The chain runs to 440 residues: Probable exopolygalacturonase C (440 aa).

Residues 1–21 (MLITNPALLGILASLVPLALG) form the signal peptide. Asparagine 84 and asparagine 151 each carry an N-linked (GlcNAc...) asparagine glycan. 3 PbH1 repeats span residues 188 to 210 (GDDITVSHAIVDATSTGGFPFNT), 217 to 238 (GTNISITDSVMFNGDDAIAVNT), and 240 to 261 (SHNIVFARNTIGYQSHGMSIGS). A glycan (N-linked (GlcNAc...) asparagine) is linked at asparagine 219. Aspartate 231 functions as the Proton donor in the catalytic mechanism. Residue histidine 255 is part of the active site. An N-linked (GlcNAc...) asparagine glycan is attached at asparagine 271. One copy of the PbH1 4 repeat lies at 272 to 293 (ITNLRFEDVTVIDALYAARFKS). Residue asparagine 313 is glycosylated (N-linked (GlcNAc...) asparagine). Residues cysteine 389 and cysteine 395 are joined by a disulfide bond. N-linked (GlcNAc...) asparagine glycosylation occurs at asparagine 434.

It belongs to the glycosyl hydrolase 28 family.

The protein resides in the secreted. The enzyme catalyses [(1-&gt;4)-alpha-D-galacturonosyl](n) + H2O = alpha-D-galacturonate + [(1-&gt;4)-alpha-D-galacturonosyl](n-1). In terms of biological role, specific in hydrolyzing the terminal glycosidic bond of polygalacturonic acid and oligogalacturonates. This chain is Probable exopolygalacturonase C (pgxC), found in Aspergillus fumigatus (strain ATCC MYA-4609 / CBS 101355 / FGSC A1100 / Af293) (Neosartorya fumigata).